The following is a 279-amino-acid chain: Diaminopimelate epimerase (279 aa).

Positions 11 and 63 each coordinate substrate. The active-site Proton donor is the Cys-72. Substrate-binding positions include 73–74, Asn-161, Asn-194, and 212–213; these read GN and ER. Cys-221 serves as the catalytic Proton acceptor. Substrate is bound at residue 222–223; the sequence is GT.

Belongs to the diaminopimelate epimerase family. As to quaternary structure, homodimer.

The protein localises to the cytoplasm. The enzyme catalyses (2S,6S)-2,6-diaminopimelate = meso-2,6-diaminopimelate. The protein operates within amino-acid biosynthesis; L-lysine biosynthesis via DAP pathway; DL-2,6-diaminopimelate from LL-2,6-diaminopimelate: step 1/1. Catalyzes the stereoinversion of LL-2,6-diaminopimelate (L,L-DAP) to meso-diaminopimelate (meso-DAP), a precursor of L-lysine and an essential component of the bacterial peptidoglycan. The protein is Diaminopimelate epimerase of Moorella thermoacetica (strain ATCC 39073 / JCM 9320).